We begin with the raw amino-acid sequence, 153 residues long: 3-hydroxyacyl-[acyl-carrier-protein] dehydratase FabZ (153 aa).

The active site involves His-58.

It belongs to the thioester dehydratase family. FabZ subfamily.

The protein resides in the cytoplasm. The enzyme catalyses a (3R)-hydroxyacyl-[ACP] = a (2E)-enoyl-[ACP] + H2O. In terms of biological role, involved in unsaturated fatty acids biosynthesis. Catalyzes the dehydration of short chain beta-hydroxyacyl-ACPs and long chain saturated and unsaturated beta-hydroxyacyl-ACPs. This Bradyrhizobium diazoefficiens (strain JCM 10833 / BCRC 13528 / IAM 13628 / NBRC 14792 / USDA 110) protein is 3-hydroxyacyl-[acyl-carrier-protein] dehydratase FabZ.